The chain runs to 1170 residues: Thrombospondin-1 (1170 aa).

The first 18 residues, 1 to 18, serve as a signal peptide directing secretion; the sequence is MELLRGLGVLFLLHMCGS. The interval 47 to 95 is heparin-binding; that stretch reads RLVKGQDLSSPAFRIENANLIPAVPDDKFQDLLDAVWADKGFIFLASLR. One can recognise a Laminin G-like domain in the interval 56 to 270; sequence SPAFRIENAN…HKTKDLQAIC (215 aa). A disulfide bond links Cys171 and Cys232. Asn248 and Asn360 each carry an N-linked (GlcNAc...) asparagine glycan. The 58-residue stretch at 316–373 folds into the VWFC domain; that stretch reads PLCFHNGVQYKNNEEWTVDSCTECHCQNSVTICKKVSCPIMPCSNATVPDGECCPRCW. 3 TSP type-1 domains span residues 379–429, 435–490, and 492–547; these read DDGW…QECD, DGGW…DACP, and NGGW…QDCP. Trp385 carries a C-linked (Man) tryptophan glycan. 3 disulfide bridges follow: Cys391-Cys423, Cys395-Cys428, and Cys406-Cys413. C-linked (Man) tryptophan glycosylation is found at Trp438 and Trp441. Intrachain disulfides connect Cys447–Cys484, Cys451–Cys489, and Cys462–Cys474. The O-linked (Fuc...) threonine glycan is linked to Thr450. Residue Trp498 is glycosylated (C-linked (Man) tryptophan). 21 cysteine pairs are disulfide-bonded: Cys504–Cys541, Cys508–Cys546, Cys519–Cys531, Cys551–Cys562, Cys556–Cys572, Cys575–Cys586, Cys592–Cys608, Cys599–Cys617, Cys620–Cys644, Cys650–Cys663, Cys657–Cys676, Cys678–Cys689, Cys705–Cys713, Cys718–Cys738, Cys754–Cys774, Cys777–Cys797, Cys813–Cys833, Cys836–Cys856, Cys874–Cys894, Cys910–Cys930, and Cys946–Cys1167. The O-linked (Fuc...) threonine glycan is linked to Thr507. The involved in retention in extracellular matrix (ECM); involved in trimer formation stretch occupies residues 531 to 1152; the sequence is CVGDVTENQV…YAGGRLGLFV (622 aa). One can recognise an EGF-like 1 domain in the interval 547-587; sequence PIDGCLSNPCFAGAKCTSYPDGSWKCGACPPGYSGNGIQCK. An O-linked (Xyl) serine glycan is attached at Ser553. In terms of domain architecture, EGF-like 2 spans 646–690; sequence PRNPCTDGTHDCNKNAKCNYLGHYSDPMYRCECKPGYAGNGIICG. 8 TSP type-3 repeats span residues 691-726, 727-762, 763-785, 786-821, 822-844, 845-882, 883-918, and 919-954; these read EDTDLDGWPNENLVCVANATYHCKKDNCPNLPNSGQ, EDYDKDGIGDACDDDDDNDKIPDDRDNCPFHYNPAQ, YDYDRDDVGDRCDNCPYNHNPDQ, ADTDKNGEGDACAVDIDGDGILNERDNCQYVYNVDQ, RDTDMDGVGDQCDNCPLEHNPDQ, LDSDSDLIGDTCDNNQDIDEDGHQNNLDNCPYVPNANQ, ADHDKDGKGDACDHDDDNDGIPDDRDNCRLVPNPDQ, and KDSDGDGRGDACKDDFDHDNVPDIDDICPENFDISE. Asn708 carries an N-linked (GlcNAc...) asparagine glycan. The interval 840–934 is disordered; sequence HNPDQLDSDS…GRGDACKDDF (95 aa). 2 stretches are compositionally biased toward basic and acidic residues: residues 883–894 and 917–934; these read ADHDKDGKGDAC and DQKDSDGDGRGDACKDDF. The short motif at 926 to 928 is the Cell attachment site element; sequence RGD. Positions 958–1170 constitute a TSP C-terminal domain; that stretch reads RRFQMIPLDP…SDMKYECRDS (213 aa). Asn1067 carries an N-linked (GlcNAc...) asparagine glycan.

It belongs to the thrombospondin family. Homotrimer; disulfide-linked. Can bind to fibrinogen, fibronectin, laminin, type V collagen and integrins alpha-V/beta-1, alpha-V/beta-3 and alpha-IIb/beta-3. Binds heparin. Interacts (via the C-terminal domain) with CD47. Interacts (via the TSP type I repeats) with CD36; the interaction conveys an antiangiogenic effect. Interacts (via the TSP type I repeats) with HRG; the interaction blocks the antiangiogenic effect of THBS1 with CD36. Interacts with ATF6 (via lumenal domain). Interacts with FN1; this interaction is enhanced by TNFAIP6, which may act as a bridging molecule between FN1 and THBS1. Interacts with SIRPA; the interaction stimulates phosphorylation of SIRPA.

The protein localises to the secreted. It is found in the cell surface. Its subcellular location is the extracellular space. The protein resides in the extracellular matrix. It localises to the endoplasmic reticulum. The protein localises to the sarcoplasmic reticulum. Its function is as follows. Adhesive glycoprotein that mediates cell-to-cell and cell-to-matrix interactions. Multifunctional, involved in inflammation, angiogenesis, wound healing, reactive oxygen species (ROS) signaling, nitrous oxide (NO) signaling, apoptosis, senescence, aging, cellular self-renewal, stemness, and cardiovascular and metabolic homeostasis. Negatively modulates dendritic cell activation and cytokine release, as part of an autocrine feedback loop, contributing to the resolution of inflammation and immune homeostasis. Ligand for receptor CD47. Modulates nitrous oxide (NO) signaling via CD47, hence playing a role as a pressor agent, supporting blood pressure. Plays a role in endothelial cell senescence, acting via CD47, by increasing the abundance and activation of NADPH oxidase NOX1, and so generating excess ROS. Inhibits stem cell self-renewal, acting via CD47 signaling, probably by regulation of the stem cell transcription factors POU5F1/OCT4, SOX2, MYC/c-Myc and KLF4. Negatively modulates wound healing, acting via CD47. Ligand for receptor CD36. Involved in inducing apoptosis in podocytes in response to elevated free fatty acids, acting via CD36. Plays a role in suppressing angiogenesis, acting, depending on context, via CD36 or CD47. Promotes cellular senescence in a TP53-CDKN1A-RB1 signaling-dependent manner. Ligand for immunoglobulin-like cell surface receptor SIRPA. Involved in ROS signaling in non-phagocytic cells, stimulating NADPH oxidase-derived ROS production, acting via interaction with SIRPA. Plays a role in metabolic dysfunction in diet-induced obesity, perhaps acting by exacerbating adipose inflammatory activity; its effects may be mediated, at least in part, through enhanced adipocyte proliferation. Plays a role in ER stress response, via its interaction with the activating transcription factor 6 alpha (ATF6) which produces adaptive ER stress response factors. May be involved in age-related conditions, including metabolic dysregulation, during normal aging. In Mus musculus (Mouse), this protein is Thrombospondin-1 (Thbs1).